Reading from the N-terminus, the 68-residue chain is Small ribosomal subunit protein bS21 (68 aa).

The protein belongs to the bacterial ribosomal protein bS21 family.

This chain is Small ribosomal subunit protein bS21, found in Cereibacter sphaeroides (strain ATCC 17029 / ATH 2.4.9) (Rhodobacter sphaeroides).